Reading from the N-terminus, the 67-residue chain is Large ribosomal subunit protein uL30 (67 aa).

The protein belongs to the universal ribosomal protein uL30 family. As to quaternary structure, part of the 50S ribosomal subunit.

The chain is Large ribosomal subunit protein uL30 from Sinorhizobium medicae (strain WSM419) (Ensifer medicae).